Here is a 210-residue protein sequence, read N- to C-terminus: PEP-dependent dihydroxyacetone kinase, ADP-binding subunit DhaL (210 aa).

The DhaL domain maps to 6–206 (TQIVNWLTRC…VMFMMQMLAL (201 aa)). The Mg(2+) site is built by Asp30, Asp35, and Asp37. Residues 38–41 (HGLN), 79–80 (AS), Gly121, Met130, Arg178, and 191–193 (DPG) contribute to the ADP site.

Homodimer. The dihydroxyacetone kinase complex is composed of a homodimer of DhaM, a homodimer of DhaK and the subunit DhaL. DhaL also forms a complex with DhaR. The cofactor is Mg(2+).

The protein localises to the cytoplasm. The catalysed reaction is dihydroxyacetone + phosphoenolpyruvate = dihydroxyacetone phosphate + pyruvate. It functions in the pathway polyol metabolism; glycerol degradation. Functionally, ADP-binding subunit of the dihydroxyacetone kinase, which is responsible for the phosphoenolpyruvate (PEP)-dependent phosphorylation of dihydroxyacetone. DhaL-ADP is converted to DhaL-ATP via a phosphoryl group transfer from DhaM and transmits it to dihydroxyacetone bound to DhaK. DhaL also acts as coactivator of the transcription activator DhaR by binding to the sensor domain of DhaR. In the presence of dihydroxyacetone, DhaL-ADP displaces DhaK and stimulates DhaR activity. In the absence of dihydroxyacetone, DhaL-ADP is converted by the PTS to DhaL-ATP, which does not bind to DhaR. The chain is PEP-dependent dihydroxyacetone kinase, ADP-binding subunit DhaL from Escherichia coli (strain K12).